Here is a 700-residue protein sequence, read N- to C-terminus: non-specific serine/threonine protein kinase Cdc7 (700 aa).

Residues 127-644 form the Protein kinase domain; sequence FDVHSRIGNG…AEEALKHPFF (518 aa). ATP contacts are provided by residues 133-141 and K163; that span reads IGNGTFSTV. D250 acts as the Proton acceptor in catalysis.

It belongs to the protein kinase superfamily. Ser/Thr protein kinase family. Component of the Dbf4-dependent kinase (DDK) complex consisting of Cdc7 and the Dbf4 ortholog chif. Interacts with chif (via the processed polypeptide Chiffon-A); the interaction is direct.

The enzyme catalyses L-seryl-[protein] + ATP = O-phospho-L-seryl-[protein] + ADP + H(+). It carries out the reaction L-threonyl-[protein] + ATP = O-phospho-L-threonyl-[protein] + ADP + H(+). Activated by chif. Inhibited by the synthetic compound XL413. Functionally, catalytic component of the Dbf4-dependent kinase (DDK) complex. Phosphorylates components of the pre-replication complex, including Mcm2 and, to a lesser extent, Mcm4. Phosphorylates histones, including H3 and H2B. Required for DNA replication and mitotic proliferation, including during the endoreplication and amplification stages of DNA replication in egg chamber follicle cells of the ovary. The chain is non-specific serine/threonine protein kinase Cdc7 from Drosophila melanogaster (Fruit fly).